A 345-amino-acid chain; its full sequence is Tyrosine--tRNA ligase (345 aa).

Tyrosine 36 contributes to the L-tyrosine binding site. The 'HIGH' region signature appears at 41 to 49; sequence PTGEMHIGH. Positions 163, 167, 170, and 185 each coordinate L-tyrosine.

This sequence belongs to the class-I aminoacyl-tRNA synthetase family. TyrS type 3 subfamily. As to quaternary structure, homodimer.

It is found in the cytoplasm. It carries out the reaction tRNA(Tyr) + L-tyrosine + ATP = L-tyrosyl-tRNA(Tyr) + AMP + diphosphate + H(+). In terms of biological role, catalyzes the attachment of tyrosine to tRNA(Tyr) in a two-step reaction: tyrosine is first activated by ATP to form Tyr-AMP and then transferred to the acceptor end of tRNA(Tyr). The sequence is that of Tyrosine--tRNA ligase from Natronomonas pharaonis (strain ATCC 35678 / DSM 2160 / CIP 103997 / JCM 8858 / NBRC 14720 / NCIMB 2260 / Gabara) (Halobacterium pharaonis).